The primary structure comprises 141 residues: LOB domain-containing protein 34 (141 aa).

Residues 16–119 form the LOB domain; that stretch reads NQCAACRHQR…SPLNYVAPVI (104 aa).

This sequence belongs to the LOB domain-containing protein family.

The sequence is that of LOB domain-containing protein 34 (LBD34) from Arabidopsis thaliana (Mouse-ear cress).